The following is a 427-amino-acid chain: Large ribosomal subunit protein uL4 (427 aa).

The residue at position 2 (A2) is an N-acetylalanine. K14 is modified (N6-acetyllysine). Omega-N-methylarginine is present on R97. K106 carries the post-translational modification N6-acetyllysine. A Glycyl lysine isopeptide (Lys-Gly) (interchain with G-Cter in SUMO2) cross-link involves residue K239. At K259 the chain carries N6-acetyllysine. T266 carries the phosphothreonine modification. A phosphoserine mark is found at S290 and S295. R300 is modified (citrulline). A Glycyl lysine isopeptide (Lys-Gly) (interchain with G-Cter in SUMO2) cross-link involves residue K327. N6-acetyllysine is present on residues K333 and K353. K364 carries the post-translational modification N6-acetyllysine; alternate. K364 participates in a covalent cross-link: Glycyl lysine isopeptide (Lys-Gly) (interchain with G-Cter in SUMO1); alternate. S365 is subject to Phosphoserine. The disordered stretch occupies residues 369–427 (AAVAGKKPVVGKKGKKAAVGVKKQKKPLVGKKAAATKKPAPEKKPAEKKPTTEEKKPAA). The segment covering 377–397 (VVGKKGKKAAVGVKKQKKPLV) has biased composition (basic residues). Positions 407-427 (PAPEKKPAEKKPTTEEKKPAA) are enriched in basic and acidic residues.

It belongs to the universal ribosomal protein uL4 family. Component of the large ribosomal subunit. May bind IPO9 with low affinity. Interacts with RBM3. Post-translationally, citrullinated by PADI4.

It is found in the cytoplasm. Functionally, component of the large ribosomal subunit. The ribosome is a large ribonucleoprotein complex responsible for the synthesis of proteins in the cell. This is Large ribosomal subunit protein uL4 (RPL4) from Pongo abelii (Sumatran orangutan).